A 1035-amino-acid chain; its full sequence is Kinesin-like protein KIN-4A (1035 aa).

Residues 11–370 (SVKVAVHIRP…LKYANRARNI (360 aa)) enclose the Kinesin motor domain. Residue 90-97 (GQTGSGKT) participates in ATP binding. 3 coiled-coil regions span residues 408 to 436 (CAEVQALKERIVWLETANEELCRELHEYR), 504 to 707 (QNSM…RKSS), and 881 to 911 (KEIVGLLRQSELRRKEAEKELKLREQAIATS). Residues 704 to 724 (RKSSPREHSAGTNGFGTNGQT) form a disordered region.

It belongs to the TRAFAC class myosin-kinesin ATPase superfamily. Kinesin family. KIN-4 subfamily. As to quaternary structure, homodimer. In terms of tissue distribution, expressed in stems and flowers. Detected in cells undergoing secondary wall deposition including developing interfascicular fibers and xylem cells, but also in dividing cells and expanding/elongating parenchyma cells.

The protein localises to the cytoplasm. It is found in the cytoskeleton. In terms of biological role, kinesin-like motor protein involved in the control of the oriented deposition of cellulose microfibrils. Its motor activity is directed toward the microtubule's plus end. It possesses the potential to drive long-distance transport of cargo along cortical microtubules. Regulates cell wall mechanics during cell elongation, by the regulation of primary and secondary walls deposition. Contributes to cortical microtubule-mediated trafficking of cell wall components. This chain is Kinesin-like protein KIN-4A, found in Arabidopsis thaliana (Mouse-ear cress).